Consider the following 380-residue polypeptide: Set1 complex component swd3 (380 aa).

7 WD repeats span residues 52 to 91, 94 to 133, 136 to 177, 179 to 219, 221 to 262, 291 to 330, and 335 to 374; these read GHEK…LECT, GHYR…SVRC, GHTN…RMLP, HSEP…KTLV, PINV…RIFD, NDSS…IIDD, and SDDP…SKHE. The residue at position 379 (serine 379) is a Phosphoserine.

In terms of assembly, component of the Set1 complex composed of ash2, sdc1, set1, shg1, spp1, swd1, swd2 and swd3.

It is found in the nucleus. Functionally, the Set1 complex specifically methylates 'Lys-4' of histone H3. The protein is Set1 complex component swd3 of Schizosaccharomyces pombe (strain 972 / ATCC 24843) (Fission yeast).